Here is a 352-residue protein sequence, read N- to C-terminus: Ion-translocating oxidoreductase complex subunit D (352 aa).

A run of 5 helical transmembrane segments spans residues 20 to 40 (IMLLVLLAAVPGIAAQLWFFG), 42 to 62 (GTLVQILLASVSALLAEALVL), 78 to 109 (ALLTGLLLAVSIPPLAPWWMVVLGTVFAVIIA), 123 to 143 (PAMIGYVVLLISFPVQMTSWL), and 148 to 168 (IAVNIPGFIDAIQVIFSGHIT). Residue Thr187 is modified to FMN phosphoryl threonine. 5 helical membrane-spanning segments follow: residues 215-235 (LAGVGWQWVNLAWLAGGVWLL), 242-262 (WHIPLSFLVTLALCATLGWLF), 267-287 (LAAPQIHLLSGATMLGAFFIL), 301-321 (LIFGALAGLLVWLIRSFGGYP), and 322-342 (DGVAFAVLLANITVPLIDYYT).

The protein belongs to the NqrB/RnfD family. As to quaternary structure, the complex is composed of six subunits: RsxA, RsxB, RsxC, RsxD, RsxE and RsxG. FMN serves as cofactor.

Its subcellular location is the cell inner membrane. Its function is as follows. Part of a membrane-bound complex that couples electron transfer with translocation of ions across the membrane. Required to maintain the reduced state of SoxR. This chain is Ion-translocating oxidoreductase complex subunit D, found in Escherichia coli (strain SMS-3-5 / SECEC).